We begin with the raw amino-acid sequence, 237 residues long: Lectin ConGF (237 aa).

Mn(2+)-binding residues include E8 and D10. The Ca(2+) site is built by D10, Y12, N14, and D19. N14 is a binding site for a carbohydrate. Residues D19 and H24 each contribute to the Mn(2+) site. Residues L99, Y100, D208, and R228 each coordinate a carbohydrate.

The protein belongs to the leguminous lectin family. As to quaternary structure, homotetramer; dimer of dimers. In terms of processing, concanavalin A-like lectins of the Diocleinae subtribe undergo proteolytic processing referred to as circular permutation. The propeptide is split into an N-terminal and a C-terminal part, the gamma and beta chain, respectively. These are then religated in beta-gamma order to form the mature alpha chain. The beta and gamma chains can often be detected in cell extracts. Residues 1-118 of the mature chain, as displayed here, probably constitute the beta chain in the propeptide, residues 119-237 the gamma chain.

In terms of biological role, lectin. Induces paw edema in mice. Has a weak vasorelaxant effect on rat aorta. Has anti-inflammatory and anti-nociceptive effects. This is Lectin ConGF from Canavalia grandiflora (Jackbean).